The sequence spans 164 residues: UPF0304 protein HSM_1818 (164 aa).

Belongs to the UPF0304 family.

The chain is UPF0304 protein HSM_1818 from Histophilus somni (strain 2336) (Haemophilus somnus).